The following is a 418-amino-acid chain: Glutamyl-tRNA reductase (418 aa).

Residues 49 to 52 (TCNR), Ser-109, 114 to 116 (EPQ), and Gln-120 contribute to the substrate site. Cys-50 functions as the Nucleophile in the catalytic mechanism. An NADP(+)-binding site is contributed by 189 to 194 (GAGETI).

It belongs to the glutamyl-tRNA reductase family. In terms of assembly, homodimer.

The catalysed reaction is (S)-4-amino-5-oxopentanoate + tRNA(Glu) + NADP(+) = L-glutamyl-tRNA(Glu) + NADPH + H(+). The protein operates within porphyrin-containing compound metabolism; protoporphyrin-IX biosynthesis; 5-aminolevulinate from L-glutamyl-tRNA(Glu): step 1/2. In terms of biological role, catalyzes the NADPH-dependent reduction of glutamyl-tRNA(Glu) to glutamate 1-semialdehyde (GSA). This Escherichia coli O157:H7 protein is Glutamyl-tRNA reductase.